Here is a 193-residue protein sequence, read N- to C-terminus: Flagellin B1 (193 aa).

The propeptide occupies 1 to 12 (MFEFITDEDERG).

Belongs to the archaeal flagellin family. In terms of processing, glycosylated.

The protein localises to the archaeal flagellum. In terms of biological role, flagellin is the subunit protein which polymerizes to form the filaments of archaeal flagella. The polypeptide is Flagellin B1 (flaB1) (Halobacterium salinarum (strain ATCC 700922 / JCM 11081 / NRC-1) (Halobacterium halobium)).